Here is a 127-residue protein sequence, read N- to C-terminus: Small ribosomal subunit protein uS12 (127 aa).

Asp-89 is subject to 3-methylthioaspartic acid.

The protein belongs to the universal ribosomal protein uS12 family. As to quaternary structure, part of the 30S ribosomal subunit. Contacts proteins S8 and S17. May interact with IF1 in the 30S initiation complex.

Functionally, with S4 and S5 plays an important role in translational accuracy. In terms of biological role, interacts with and stabilizes bases of the 16S rRNA that are involved in tRNA selection in the A site and with the mRNA backbone. Located at the interface of the 30S and 50S subunits, it traverses the body of the 30S subunit contacting proteins on the other side and probably holding the rRNA structure together. The combined cluster of proteins S8, S12 and S17 appears to hold together the shoulder and platform of the 30S subunit. This Campylobacter fetus subsp. fetus (strain 82-40) protein is Small ribosomal subunit protein uS12.